A 162-amino-acid chain; its full sequence is Large ribosomal subunit protein uL10 (162 aa).

This sequence belongs to the universal ribosomal protein uL10 family. Part of the ribosomal stalk of the 50S ribosomal subunit. The N-terminus interacts with L11 and the large rRNA to form the base of the stalk. The C-terminus forms an elongated spine to which L12 dimers bind in a sequential fashion forming a multimeric L10(L12)X complex.

Its function is as follows. Forms part of the ribosomal stalk, playing a central role in the interaction of the ribosome with GTP-bound translation factors. In Vibrio cholerae serotype O1 (strain ATCC 39541 / Classical Ogawa 395 / O395), this protein is Large ribosomal subunit protein uL10.